We begin with the raw amino-acid sequence, 168 residues long: Endoribonuclease YbeY (168 aa).

Zn(2+) contacts are provided by H132, H136, and H142.

This sequence belongs to the endoribonuclease YbeY family. It depends on Zn(2+) as a cofactor.

It is found in the cytoplasm. Functionally, single strand-specific metallo-endoribonuclease involved in late-stage 70S ribosome quality control and in maturation of the 3' terminus of the 16S rRNA. This is Endoribonuclease YbeY from Clostridium perfringens (strain SM101 / Type A).